We begin with the raw amino-acid sequence, 197 residues long: MTQSKNKVVIFLGPPGAGKGTQAARLAQEHQLVQLSTGDILRDHVARGTALGQQAGPLMEAGQLVPDELLIALIRDRLADMEPVRVIFDGFPRTQAQAEALDLLLEELGAPVSAVPLLEVPDQVLIDRIVDRGRQAVAEGRAPRADDNEETARKRQQVYREQTQPLIDYYARRGHLYTVDGLGTPDEVYERILSGMH.

16-21 (GAGKGT) lines the ATP pocket. The NMP stretch occupies residues 36–65 (STGDILRDHVARGTALGQQAGPLMEAGQLV). AMP is bound by residues T37, R42, 63-65 (QLV), 90-93 (GFPR), and Q97. The LID stretch occupies residues 131–147 (DRGRQAVAEGRAPRADD). R132 contacts ATP. The tract at residues 137–158 (VAEGRAPRADDNEETARKRQQV) is disordered. Residues 141–153 (RAPRADDNEETAR) are compositionally biased toward basic and acidic residues. Residues R144 and R155 each coordinate AMP. An ATP-binding site is contributed by G183.

Belongs to the adenylate kinase family. In terms of assembly, monomer.

It localises to the cytoplasm. The catalysed reaction is AMP + ATP = 2 ADP. It participates in purine metabolism; AMP biosynthesis via salvage pathway; AMP from ADP: step 1/1. Catalyzes the reversible transfer of the terminal phosphate group between ATP and AMP. Plays an important role in cellular energy homeostasis and in adenine nucleotide metabolism. In Deinococcus radiodurans (strain ATCC 13939 / DSM 20539 / JCM 16871 / CCUG 27074 / LMG 4051 / NBRC 15346 / NCIMB 9279 / VKM B-1422 / R1), this protein is Adenylate kinase.